Reading from the N-terminus, the 270-residue chain is 1-deoxy-11-beta-hydroxypentalenate dehydrogenase (270 aa).

Residue 12 to 36 (GAASGIGFALSARLAQAGARVVMTD) coordinates NAD(+). Position 144 (Ser-144) interacts with substrate. Residue Tyr-157 is the Proton acceptor of the active site. Lys-161 is a binding site for NAD(+).

It belongs to the short-chain dehydrogenases/reductases (SDR) family.

The enzyme catalyses 1-deoxy-11beta-hydroxypentalenate + NAD(+) = 1-deoxy-11-oxopentalenate + NADH + H(+). Its pathway is antibiotic biosynthesis; neopentalenolactone biosynthesis. Catalyzes the oxidation of 1-deoxy-11-beta-hydroxypentalenic acid to 1-deoxy-11-oxopentalenic acid in the biosynthesis of neopentalenolactone antibiotic. This Streptomyces avermitilis (strain ATCC 31267 / DSM 46492 / JCM 5070 / NBRC 14893 / NCIMB 12804 / NRRL 8165 / MA-4680) protein is 1-deoxy-11-beta-hydroxypentalenate dehydrogenase (ptlF).